The primary structure comprises 454 residues: UDP-N-acetylmuramate--L-alanine ligase (454 aa).

ATP is bound at residue 113–119 (GSHGKTT).

This sequence belongs to the MurCDEF family.

Its subcellular location is the cytoplasm. It carries out the reaction UDP-N-acetyl-alpha-D-muramate + L-alanine + ATP = UDP-N-acetyl-alpha-D-muramoyl-L-alanine + ADP + phosphate + H(+). The protein operates within cell wall biogenesis; peptidoglycan biosynthesis. Cell wall formation. The polypeptide is UDP-N-acetylmuramate--L-alanine ligase (Sulfurihydrogenibium sp. (strain YO3AOP1)).